Here is a 434-residue protein sequence, read N- to C-terminus: Serine hydroxymethyltransferase (434 aa).

(6S)-5,6,7,8-tetrahydrofolate contacts are provided by residues leucine 133 and 137–139 (GHL). At lysine 242 the chain carries N6-(pyridoxal phosphate)lysine.

Belongs to the SHMT family. In terms of assembly, homodimer. Pyridoxal 5'-phosphate serves as cofactor.

The protein resides in the cytoplasm. The catalysed reaction is (6R)-5,10-methylene-5,6,7,8-tetrahydrofolate + glycine + H2O = (6S)-5,6,7,8-tetrahydrofolate + L-serine. Its pathway is one-carbon metabolism; tetrahydrofolate interconversion. It participates in amino-acid biosynthesis; glycine biosynthesis; glycine from L-serine: step 1/1. Catalyzes the reversible interconversion of serine and glycine with tetrahydrofolate (THF) serving as the one-carbon carrier. This reaction serves as the major source of one-carbon groups required for the biosynthesis of purines, thymidylate, methionine, and other important biomolecules. Also exhibits THF-independent aldolase activity toward beta-hydroxyamino acids, producing glycine and aldehydes, via a retro-aldol mechanism. The sequence is that of Serine hydroxymethyltransferase from Caulobacter sp. (strain K31).